Reading from the N-terminus, the 350-residue chain is Phenylalanine--tRNA ligase alpha subunit (350 aa).

Mg(2+) is bound at residue Glu-260.

The protein belongs to the class-II aminoacyl-tRNA synthetase family. Phe-tRNA synthetase alpha subunit type 1 subfamily. In terms of assembly, tetramer of two alpha and two beta subunits. The cofactor is Mg(2+).

It is found in the cytoplasm. It catalyses the reaction tRNA(Phe) + L-phenylalanine + ATP = L-phenylalanyl-tRNA(Phe) + AMP + diphosphate + H(+). The chain is Phenylalanine--tRNA ligase alpha subunit from Mycoplasma capricolum subsp. capricolum (strain California kid / ATCC 27343 / NCTC 10154).